The sequence spans 126 residues: Large ribosomal subunit protein bL12 (126 aa).

This sequence belongs to the bacterial ribosomal protein bL12 family. Homodimer. Part of the ribosomal stalk of the 50S ribosomal subunit. Forms a multimeric L10(L12)X complex, where L10 forms an elongated spine to which 2 to 4 L12 dimers bind in a sequential fashion. Binds GTP-bound translation factors.

Functionally, forms part of the ribosomal stalk which helps the ribosome interact with GTP-bound translation factors. Is thus essential for accurate translation. The protein is Large ribosomal subunit protein bL12 of Desulfatibacillum aliphaticivorans.